The sequence spans 301 residues: Pantothenate synthetase (301 aa).

Residue 30 to 37 (MGNLHEGH) participates in ATP binding. The active-site Proton donor is the His37. Gln61 is a binding site for (R)-pantoate. Beta-alanine is bound at residue Gln61. Residue 149 to 152 (GEKD) coordinates ATP. (R)-pantoate is bound at residue Gln155. ATP contacts are provided by residues Val178 and 186–189 (MSSR).

This sequence belongs to the pantothenate synthetase family. As to quaternary structure, homodimer.

The protein resides in the cytoplasm. It catalyses the reaction (R)-pantoate + beta-alanine + ATP = (R)-pantothenate + AMP + diphosphate + H(+). It participates in cofactor biosynthesis; (R)-pantothenate biosynthesis; (R)-pantothenate from (R)-pantoate and beta-alanine: step 1/1. Its function is as follows. Catalyzes the condensation of pantoate with beta-alanine in an ATP-dependent reaction via a pantoyl-adenylate intermediate. This is Pantothenate synthetase from Vibrio vulnificus (strain YJ016).